The sequence spans 229 residues: Putative N-acetylmannosamine-6-phosphate 2-epimerase (229 aa).

This sequence belongs to the NanE family.

It carries out the reaction an N-acyl-D-glucosamine 6-phosphate = an N-acyl-D-mannosamine 6-phosphate. Its pathway is amino-sugar metabolism; N-acetylneuraminate degradation; D-fructose 6-phosphate from N-acetylneuraminate: step 3/5. Its function is as follows. Converts N-acetylmannosamine-6-phosphate (ManNAc-6-P) to N-acetylglucosamine-6-phosphate (GlcNAc-6-P). The sequence is that of Putative N-acetylmannosamine-6-phosphate 2-epimerase from Actinobacillus pleuropneumoniae serotype 5b (strain L20).